The chain runs to 268 residues: Agamous-like MADS-box protein AGL15 (268 aa).

Residues 1–61 enclose the MADS-box domain; the sequence is MGRGKIEIKR…GKLFEYSSTG (61 aa). The K-box domain maps to 80 to 170; that stretch reads AEEDCAEVDI…RRQVQELRSF (91 aa). A disordered region spans residues 205–268; that stretch reads TDSDTTLQLG…PEAKRQRFSV (64 aa). A compositionally biased stretch (basic and acidic residues) spans 218–232; the sequence is EAHDRRTNEGERESP. A compositionally biased stretch (polar residues) spans 233-244; that stretch reads SSDSVTTNTSSE.

Homodimer. Interacts with SVP, AGL24, AP1, AGL6, AG, AGL1, AGL11, AGL5, AGL16, SOC1 and AGL21. In terms of tissue distribution, expressed at low levels in flowers and siliques. Also present in seedlings. Detected during embryogenesis and accumulates during early seed development (at protein level). Expressed in shoot apices and the base of leaf petioles.

It localises to the nucleus. The protein resides in the cytoplasm. Transcription factor involved in the negative regulation of flowering, probably through the photoperiodic pathway. Acts both as an activator and as a repressor of transcription. Binds DNA in a sequence-specific manner in large CArG motif 5'-CC (A/T)8 GG-3'. Participates probably in the regulation of programs active during the early stages of embryo development. Prevents premature perianth senescence and abscission, fruits development and seed desiccation. Stimulates the expression of at least DTA4, LEC2, FUS3, ABI3, AT4G38680/CSP2 and GRP2B/CSP4. Can enhance somatic embryo development in vitro. The protein is Agamous-like MADS-box protein AGL15 (AGL15) of Arabidopsis thaliana (Mouse-ear cress).